Consider the following 1152-residue polypeptide: DNA-directed RNA polymerase subunit beta (1152 aa).

This sequence belongs to the RNA polymerase beta chain family. The RNAP catalytic core consists of 2 alpha, 1 beta, 1 beta' and 1 omega subunit. When a sigma factor is associated with the core the holoenzyme is formed, which can initiate transcription.

It carries out the reaction RNA(n) + a ribonucleoside 5'-triphosphate = RNA(n+1) + diphosphate. In terms of biological role, DNA-dependent RNA polymerase catalyzes the transcription of DNA into RNA using the four ribonucleoside triphosphates as substrates. This Deinococcus geothermalis (strain DSM 11300 / CIP 105573 / AG-3a) protein is DNA-directed RNA polymerase subunit beta.